Consider the following 167-residue polypeptide: Xanthine-guanine phosphoribosyltransferase (167 aa).

Residues 47–48, glutamine 79, and 102–110 each bind 5-phospho-alpha-D-ribose 1-diphosphate; these read RG and DDLVDSGKT. Glutamine 79 contacts GMP. Aspartate 103 is a Mg(2+) binding site. Positions 106 and 149 each coordinate guanine. Residues aspartate 106 and isoleucine 149 each coordinate xanthine. Residues 106–110 and 148–149 contribute to the GMP site; these read DSGKT and WI.

This sequence belongs to the purine/pyrimidine phosphoribosyltransferase family. XGPT subfamily. In terms of assembly, homotetramer. Mg(2+) serves as cofactor.

It localises to the cell inner membrane. It catalyses the reaction GMP + diphosphate = guanine + 5-phospho-alpha-D-ribose 1-diphosphate. The enzyme catalyses XMP + diphosphate = xanthine + 5-phospho-alpha-D-ribose 1-diphosphate. It carries out the reaction IMP + diphosphate = hypoxanthine + 5-phospho-alpha-D-ribose 1-diphosphate. Its pathway is purine metabolism; GMP biosynthesis via salvage pathway; GMP from guanine: step 1/1. The protein operates within purine metabolism; XMP biosynthesis via salvage pathway; XMP from xanthine: step 1/1. Its function is as follows. Purine salvage pathway enzyme that catalyzes the transfer of the ribosyl-5-phosphate group from 5-phospho-alpha-D-ribose 1-diphosphate (PRPP) to the N9 position of the 6-oxopurines guanine and xanthine to form the corresponding ribonucleotides GMP (guanosine 5'-monophosphate) and XMP (xanthosine 5'-monophosphate), with the release of PPi. To a lesser extent, also acts on hypoxanthine. The chain is Xanthine-guanine phosphoribosyltransferase from Cereibacter sphaeroides (strain ATCC 17025 / ATH 2.4.3) (Rhodobacter sphaeroides).